The primary structure comprises 333 residues: Anthranilate phosphoribosyltransferase (333 aa).

5-phospho-alpha-D-ribose 1-diphosphate-binding positions include Gly-81, Gly-84 to Asp-85, Thr-89, Asn-91 to Thr-94, Lys-109 to Ser-117, and Ala-121. Gly-81 contributes to the anthranilate binding site. Ser-93 contributes to the Mg(2+) binding site. Residue Asn-112 participates in anthranilate binding. Anthranilate is bound at residue Arg-167. Mg(2+)-binding residues include Asp-225 and Glu-226.

Belongs to the anthranilate phosphoribosyltransferase family. Homodimer. Mg(2+) is required as a cofactor.

It carries out the reaction N-(5-phospho-beta-D-ribosyl)anthranilate + diphosphate = 5-phospho-alpha-D-ribose 1-diphosphate + anthranilate. Its pathway is amino-acid biosynthesis; L-tryptophan biosynthesis; L-tryptophan from chorismate: step 2/5. Catalyzes the transfer of the phosphoribosyl group of 5-phosphorylribose-1-pyrophosphate (PRPP) to anthranilate to yield N-(5'-phosphoribosyl)-anthranilate (PRA). This chain is Anthranilate phosphoribosyltransferase, found in Pasteurella multocida (strain Pm70).